Reading from the N-terminus, the 330-residue chain is Lipoyl synthase (330 aa).

Residues Cys-77, Cys-82, Cys-88, Cys-103, Cys-107, Cys-110, and Ser-317 each coordinate [4Fe-4S] cluster. One can recognise a Radical SAM core domain in the interval 89–306 (FNHGTATFMI…RSEAERMGFE (218 aa)).

It belongs to the radical SAM superfamily. Lipoyl synthase family. [4Fe-4S] cluster serves as cofactor.

Its subcellular location is the cytoplasm. It carries out the reaction [[Fe-S] cluster scaffold protein carrying a second [4Fe-4S](2+) cluster] + N(6)-octanoyl-L-lysyl-[protein] + 2 oxidized [2Fe-2S]-[ferredoxin] + 2 S-adenosyl-L-methionine + 4 H(+) = [[Fe-S] cluster scaffold protein] + N(6)-[(R)-dihydrolipoyl]-L-lysyl-[protein] + 4 Fe(3+) + 2 hydrogen sulfide + 2 5'-deoxyadenosine + 2 L-methionine + 2 reduced [2Fe-2S]-[ferredoxin]. It participates in protein modification; protein lipoylation via endogenous pathway; protein N(6)-(lipoyl)lysine from octanoyl-[acyl-carrier-protein]: step 2/2. Functionally, catalyzes the radical-mediated insertion of two sulfur atoms into the C-6 and C-8 positions of the octanoyl moiety bound to the lipoyl domains of lipoate-dependent enzymes, thereby converting the octanoylated domains into lipoylated derivatives. This Actinobacillus pleuropneumoniae serotype 5b (strain L20) protein is Lipoyl synthase.